The chain runs to 371 residues: 3-isopropylmalate dehydrogenase (371 aa).

Thr55 carries the phosphothreonine modification. Gly78–Glu89 is a binding site for NAD(+). 4 residues coordinate substrate: Arg96, Arg106, Arg135, and Asp224. Positions 224, 249, and 253 each coordinate Mg(2+). Gly290–Asn302 lines the NAD(+) pocket.

The protein belongs to the isocitrate and isopropylmalate dehydrogenases family. As to quaternary structure, homodimer. Mg(2+) serves as cofactor. Mn(2+) is required as a cofactor.

Its subcellular location is the cytoplasm. It carries out the reaction (2R,3S)-3-isopropylmalate + NAD(+) = 4-methyl-2-oxopentanoate + CO2 + NADH. It participates in amino-acid biosynthesis; L-leucine biosynthesis; L-leucine from 3-methyl-2-oxobutanoate: step 3/4. Its function is as follows. Catalyzes the oxidation of 3-carboxy-2-hydroxy-4-methylpentanoate (3-isopropylmalate) to 3-carboxy-4-methyl-2-oxopentanoate. The product decarboxylates to 4-methyl-2 oxopentanoate. The sequence is that of 3-isopropylmalate dehydrogenase (leu1) from Schizosaccharomyces pombe (strain 972 / ATCC 24843) (Fission yeast).